Here is a 422-residue protein sequence, read N- to C-terminus: Glutamate 2,3-aminomutase (422 aa).

Residues 150-371 enclose the Radical SAM core domain; the sequence is RRYPDRLIIN…AIPTYIVNAP (222 aa). 3 residues coordinate [4Fe-4S] cluster: cysteine 164, cysteine 168, and cysteine 171. An N6-(pyridoxal phosphate)lysine modification is found at lysine 376.

This sequence belongs to the radical SAM superfamily. The cofactor is pyridoxal 5'-phosphate. [4Fe-4S] cluster serves as cofactor.

It carries out the reaction L-glutamate = 3-aminopentanedioate. In terms of biological role, catalyzes the interconversion of L-glutamate and L-beta-glutamate. Does not have L-lysine 2,3-aminomutase activity. In Clostridioides difficile (strain 630) (Peptoclostridium difficile), this protein is Glutamate 2,3-aminomutase (eam).